The sequence spans 125 residues: Large ribosomal subunit protein bL12 (125 aa).

The protein belongs to the bacterial ribosomal protein bL12 family. As to quaternary structure, homodimer. Part of the ribosomal stalk of the 50S ribosomal subunit. Forms a multimeric L10(L12)X complex, where L10 forms an elongated spine to which 2 to 4 L12 dimers bind in a sequential fashion. Binds GTP-bound translation factors.

Functionally, forms part of the ribosomal stalk which helps the ribosome interact with GTP-bound translation factors. Is thus essential for accurate translation. The sequence is that of Large ribosomal subunit protein bL12 from Chelativorans sp. (strain BNC1).